The primary structure comprises 432 residues: Adenylosuccinate synthetase (432 aa).

GTP is bound by residues 12–18 and 40–42; these read GDEGKGK and GHT. Residue Asp-13 is the Proton acceptor of the active site. Asp-13 and Gly-40 together coordinate Mg(2+). Residues 13–16, 38–41, Thr-129, Arg-143, Gln-224, Thr-239, and Arg-303 contribute to the IMP site; these read DEGK and NAGH. The active-site Proton donor is His-41. Substrate is bound at residue 299–305; that stretch reads VTTGRRR. GTP contacts are provided by residues Arg-305, 331-333, and 413-415; these read KLD and GVG.

It belongs to the adenylosuccinate synthetase family. As to quaternary structure, homodimer. It depends on Mg(2+) as a cofactor.

The protein resides in the cytoplasm. The catalysed reaction is IMP + L-aspartate + GTP = N(6)-(1,2-dicarboxyethyl)-AMP + GDP + phosphate + 2 H(+). Its pathway is purine metabolism; AMP biosynthesis via de novo pathway; AMP from IMP: step 1/2. Functionally, plays an important role in the de novo pathway of purine nucleotide biosynthesis. Catalyzes the first committed step in the biosynthesis of AMP from IMP. The polypeptide is Adenylosuccinate synthetase (Mycobacterium leprae (strain TN)).